The primary structure comprises 61 residues: Small ribosomal subunit protein uS14 (61 aa).

Positions 24, 27, 40, and 43 each coordinate Zn(2+).

This sequence belongs to the universal ribosomal protein uS14 family. Zinc-binding uS14 subfamily. As to quaternary structure, part of the 30S ribosomal subunit. Contacts proteins S3 and S10. It depends on Zn(2+) as a cofactor.

Functionally, binds 16S rRNA, required for the assembly of 30S particles and may also be responsible for determining the conformation of the 16S rRNA at the A site. In Sulfurovum sp. (strain NBC37-1), this protein is Small ribosomal subunit protein uS14.